Here is a 405-residue protein sequence, read N- to C-terminus: Phosphoglycerate kinase (405 aa).

Residues 24–26 (DFN), R40, 63–66 (HLGR), R122, and R162 contribute to the substrate site. Residues K212, E331, and 361–364 (GGDS) each bind ATP.

The protein belongs to the phosphoglycerate kinase family. Monomer.

The protein resides in the cytoplasm. It catalyses the reaction (2R)-3-phosphoglycerate + ATP = (2R)-3-phospho-glyceroyl phosphate + ADP. It participates in carbohydrate degradation; glycolysis; pyruvate from D-glyceraldehyde 3-phosphate: step 2/5. The polypeptide is Phosphoglycerate kinase (pgk) (Corynebacterium glutamicum (strain ATCC 13032 / DSM 20300 / JCM 1318 / BCRC 11384 / CCUG 27702 / LMG 3730 / NBRC 12168 / NCIMB 10025 / NRRL B-2784 / 534)).